Reading from the N-terminus, the 396-residue chain is Anticodon nuclease (396 aa).

Functionally, anticodon endonuclease (ACNase) that triggers the cleavage ligation of tRNA(Lys). It is activated by T4 stp protein and masked by the prrD protein (the endonuclease subunit of EcoprrI). The prr locus restricts phage T4 mutants lacking polynucleotide kinase or RNA ligase; T4 mutants lacking these genes manifest a T4-induced anticodon nuclease (ACNase). It is thought that Stp and other T4-encoded ACNase factors counteract the masking agents, thus activating the latent ACNase. This is Anticodon nuclease from Escherichia coli.